Here is a 371-residue protein sequence, read N- to C-terminus: MPLADFHRSDPFTLGIELELQVVNPPGYDLSQDASTLIADVQHQLTVGEAKHDITESMLEIATGVCRDISHAQTQLSAIQQAVQRAALRHHLQICGGGSHPFHAWQRQQISDNPRYVKTVEHFGYLAQQATVFGQHVHVGCQSGDDALYLLHGLSRFVPHFIALNAASPWFDSTDSRFACSRLNRFSSYPDNGPMPWVADWQGFRRLFRQLSYTSMIDSMKDLHWDIRPSPQFGTVEVRVMDTPLTLAQAIHIAGFIQTLACWLLTERPFKHQPDDYLLYPFNRYQACRYGLDGTLTDVRSGEQRSIRQEILQLADRLAPFAHQLKATAALEAVVRQAKSPHSEAQQMRDFIANGGSLSGLVQKHCEIWAA.

The protein belongs to the glutamate--cysteine ligase type 2 family. YbdK subfamily. In terms of assembly, homodimer.

The catalysed reaction is L-cysteine + L-glutamate + ATP = gamma-L-glutamyl-L-cysteine + ADP + phosphate + H(+). In terms of biological role, ATP-dependent carboxylate-amine ligase which exhibits weak glutamate--cysteine ligase activity. This Klebsiella pneumoniae (strain 342) protein is Putative glutamate--cysteine ligase 2.